Here is a 276-residue protein sequence, read N- to C-terminus: Bifunctional protein FolD 1 (276 aa).

NADP(+)-binding positions include 161-163, serine 186, and threonine 227; that span reads GRG.

The protein belongs to the tetrahydrofolate dehydrogenase/cyclohydrolase family. Homodimer.

The enzyme catalyses (6R)-5,10-methylene-5,6,7,8-tetrahydrofolate + NADP(+) = (6R)-5,10-methenyltetrahydrofolate + NADPH. It carries out the reaction (6R)-5,10-methenyltetrahydrofolate + H2O = (6R)-10-formyltetrahydrofolate + H(+). The protein operates within one-carbon metabolism; tetrahydrofolate interconversion. Its function is as follows. Catalyzes the oxidation of 5,10-methylenetetrahydrofolate to 5,10-methenyltetrahydrofolate and then the hydrolysis of 5,10-methenyltetrahydrofolate to 10-formyltetrahydrofolate. This Frankia casuarinae (strain DSM 45818 / CECT 9043 / HFP020203 / CcI3) protein is Bifunctional protein FolD 1.